Consider the following 504-residue polypeptide: Probable GTP-binding protein OBGC2 (504 aa).

Residues Ala24–Ala39 are compositionally biased toward basic and acidic residues. Disordered regions lie at residues Ala24–Asn46 and Val93–Lys122. Positions His73–Val276 constitute an Obg domain. Residues Ser107–Lys122 are compositionally biased toward basic residues. The region spanning Ala277–Arg494 is the OBG-type G domain. GTP contacts are provided by residues Gly283–Ser290 and Asp337–Leu341. The segment covering Ser436–Glu452 has biased composition (polar residues). The interval Ser436–Arg463 is disordered. Positions Thr453–Arg463 are enriched in basic and acidic residues.

It belongs to the TRAFAC class OBG-HflX-like GTPase superfamily. OBG GTPase family.

In terms of biological role, may bind GTP and have GTPase activity. This Oryza sativa subsp. japonica (Rice) protein is Probable GTP-binding protein OBGC2.